The following is a 364-amino-acid chain: Flagellar P-ring protein (364 aa).

A signal peptide spans Met1–Ala21.

This sequence belongs to the FlgI family. In terms of assembly, the basal body constitutes a major portion of the flagellar organelle and consists of four rings (L,P,S, and M) mounted on a central rod.

Its subcellular location is the periplasm. The protein localises to the bacterial flagellum basal body. Assembles around the rod to form the L-ring and probably protects the motor/basal body from shearing forces during rotation. This Pseudoalteromonas translucida (strain TAC 125) protein is Flagellar P-ring protein.